Consider the following 1032-residue polypeptide: Contactin-1a (1032 aa).

The N-terminal stretch at 1-31 (MIPEAFQPRAMKHTTTVLMLALSSRFWSVCA) is a signal peptide. Ig-like C2-type domains follow at residues 46 to 139 (PVFE…ARVQ), 144 to 231 (DMFS…KSVF), 249 to 335 (PADI…THLY), 340 to 417 (PDWL…AELR), 423 to 510 (PSFQ…GSLS), and 515 to 612 (TKIT…AELV). Cystine bridges form between Cys70–Cys122 and Cys166–Cys219. N-linked (GlcNAc...) asparagine glycans are attached at residues Asn119, Asn216, and Asn266. Disulfide bonds link Cys271–Cys319, Cys361–Cys401, and Cys446–Cys494. N-linked (GlcNAc...) asparagine glycosylation is found at Asn455, Asn467, Asn483, and Asn504. The cysteines at positions 536 and 596 are disulfide-linked. Asn604 is a glycosylation site (N-linked (GlcNAc...) asparagine). Fibronectin type-III domains are found at residues 619–718 (PPGG…TREA), 723–820 (APSD…SAQD), 825–918 (APII…TKKS), and 920–1015 (PSRP…APAP). Residues 699–729 (NTLGTGPPSEPSPKTTTREARPIVAPSDIGG) form a disordered region. Residue Asn879 is glycosylated (N-linked (GlcNAc...) asparagine). A disordered region spans residues 907 to 926 (ASQRNRIYTKKSPPSRPPKI). Asn950 is a glycosylation site (N-linked (GlcNAc...) asparagine). Gly1010 carries GPI-anchor amidated glycine lipidation. Positions 1011-1032 (SAPAPALASALLLLPLLWTLML) are cleaved as a propeptide — removed in mature form.

This sequence belongs to the immunoglobulin superfamily. Contactin family. In terms of tissue distribution, expressed in brain.

The protein resides in the cell membrane. Functionally, mediates cell surface interactions during nervous system development. The chain is Contactin-1a (cntn1a) from Danio rerio (Zebrafish).